A 392-amino-acid polypeptide reads, in one-letter code: Phosphoglycerate kinase (392 aa).

Residues 21 to 23, Arg36, 59 to 62, Arg113, and Arg146 contribute to the substrate site; these read DFN and HLGR. ATP is bound by residues Lys197, Glu319, and 345-348; that span reads GGDT.

Belongs to the phosphoglycerate kinase family. Monomer.

The protein resides in the cytoplasm. It carries out the reaction (2R)-3-phosphoglycerate + ATP = (2R)-3-phospho-glyceroyl phosphate + ADP. It functions in the pathway carbohydrate degradation; glycolysis; pyruvate from D-glyceraldehyde 3-phosphate: step 2/5. This Francisella tularensis subsp. holarctica (strain FTNF002-00 / FTA) protein is Phosphoglycerate kinase.